The sequence spans 208 residues: Coiled-coil domain-containing protein 25 (208 aa).

Residues 1–105 are Extracellular-facing; it reads MVFYFTSSSV…SNLKKTADMD (105 aa). Residues 21–25 are DNA-binding; that stretch reads KDKYE. At Lys-23 the chain carries N6-acetyllysine. The helical transmembrane segment at 106-122 threads the bilayer; it reads VGQIGFHRQKDVKIVTV. Residues 117-187 are a coiled coil; it reads VKIVTVEKKV…REMDELRSYS (71 aa). At 123–208 the chain is on the cytoplasmic side; the sequence is EKKVNEILNR…QDGNDSDEFM (86 aa). Positions 145 to 184 are enriched in basic and acidic residues; the sequence is EAEKECRDHEERNEKKAQIQEMKRREKEEMKKKREMDELR. A disordered region spans residues 145–208; sequence EAEKECRDHE…QDGNDSDEFM (64 aa). The residue at position 204 (Ser-204) is a Phosphoserine.

Belongs to the CCDC25 family. Interacts (via cytoplasmic region) with ILK.

Its subcellular location is the cell membrane. The protein localises to the endomembrane system. Functionally, transmembrane receptor that senses neutrophil extracellular traps (NETs) and triggers the ILK-PARVB pathway to enhance cell motility. NETs are mainly composed of DNA fibers and are released by neutrophils to bind pathogens during inflammation. Formation of NETs is also associated with cancer metastasis, NET-DNA acting as a chemotactic factor to attract cancer cells. Specifically binds NETs on its extracellular region, in particular the 8-OHdG-enriched DNA present in NETs, and recruits ILK, initiating the ILK-PARVB cascade to induce cytoskeleton rearrangement and directional migration of cells. This chain is Coiled-coil domain-containing protein 25, found in Bos taurus (Bovine).